The sequence spans 245 residues: UDP-2,3-diacylglucosamine hydrolase (245 aa).

Residues Asp8, His10, Asp41, Asn79, and His114 each contribute to the Mn(2+) site. Residue 79-80 (NR) participates in substrate binding. Substrate contacts are provided by Asp122, Ser160, Lys164, Lys167, and His195. The Mn(2+) site is built by His195 and His197.

Belongs to the LpxH family. Mn(2+) is required as a cofactor.

The protein resides in the cell inner membrane. The enzyme catalyses UDP-2-N,3-O-bis[(3R)-3-hydroxytetradecanoyl]-alpha-D-glucosamine + H2O = 2-N,3-O-bis[(3R)-3-hydroxytetradecanoyl]-alpha-D-glucosaminyl 1-phosphate + UMP + 2 H(+). Its pathway is glycolipid biosynthesis; lipid IV(A) biosynthesis; lipid IV(A) from (3R)-3-hydroxytetradecanoyl-[acyl-carrier-protein] and UDP-N-acetyl-alpha-D-glucosamine: step 4/6. Its function is as follows. Hydrolyzes the pyrophosphate bond of UDP-2,3-diacylglucosamine to yield 2,3-diacylglucosamine 1-phosphate (lipid X) and UMP by catalyzing the attack of water at the alpha-P atom. Involved in the biosynthesis of lipid A, a phosphorylated glycolipid that anchors the lipopolysaccharide to the outer membrane of the cell. This chain is UDP-2,3-diacylglucosamine hydrolase, found in Aromatoleum aromaticum (strain DSM 19018 / LMG 30748 / EbN1) (Azoarcus sp. (strain EbN1)).